The following is an 82-amino-acid chain: M-zodatoxin-Lt3b (82 aa).

A signal peptide spans 1–22 (MKTYAVLLALVVAFVCIAESTG). Positions 23 to 61 (YPVEDLEDDELTELEAEALLEDLLEDLELEDLDYNEEAR) are excised as a propeptide. The short motif at 58–61 (EEAR) is the Processing quadruplet motif element. Residue A81 is modified to Alanine amide.

Cleavage of the propeptide depends on the processing quadruplet motif (XXXR, with at least one of X being E). Expressed by the venom gland.

Its subcellular location is the secreted. It has antimicrobial activity against Gram-positive bacteria (A.globiformis VKM Ac-1112 (MIC=0.7 uM), and B.subtilis VKM B-501 (MIC=2.9 uM)), Gram-negative bacteria (E.coli DH5-alpha (MIC=23 uM), E.coli MH1 (MIC=28 uM), and P.aeruginosa PAO1 (MIC&gt;45 uM)), and yeasts (P.pastoris GS115 (MIC=23 uM), and S.cerevisiae Y190 (MIC=23 uM)). Does not have hemolytic against rabbit erythrocytes. Causes paralysis, but is not lethal when injected into insect (M.domestica) larvae. This is M-zodatoxin-Lt3b from Lachesana tarabaevi (Spider).